The following is a 34-amino-acid chain: Protamine-Z1/Z2 (34 aa).

The disordered stretch occupies residues 1 to 34; it reads PRRRRRSSRPVRRRRRYRRSTVARRRRRVVRRRR.

Testis.

The protein resides in the nucleus. It is found in the chromosome. Its function is as follows. Protamines substitute for histones in the chromatin of sperm during the haploid phase of spermatogenesis. They compact sperm DNA into a highly condensed, stable and inactive complex. The protein is Protamine-Z1/Z2 of Thunnus thynnus (Atlantic bluefin tuna).